Consider the following 371-residue polypeptide: MKPHVVVGMSGGVDSSVTALLLLRQGYRVSGLFMKNWEEDDGTEYCTAAQDFADAKQVCERLGVELHTVNFAAEYWDEVFEVFLSEYRAGRTPNPDILCNKQIKFRAFLDYAEDLGADLIAMGHYARVAEEEGRLQLLKGCDPGKDQSYFLYTLQQEQLARTLFPLGGLRKTEVRALAAGAGFANDAKKDSTGICFIGERRFKDFLARYLPARPGDIRTPEGVLLGRHDGLMYYTLGQRSGLGIGGTRAGGQEPWYVLDKDLARNVLVVGQGHDHPLLYRDGLLASRLHWVDGAGPAPGEILRCAAKTRYRQSDQDCRIRLIGEDRLEVVFAQPQRAVTPGQSVVFYQDDCCLGGGVIDLTFNADSRADAA.

ATP-binding positions include 8–15 (GMSGGVDS) and Met34. The interval 94–96 (NPD) is interaction with target base in tRNA. The Nucleophile role is filled by Cys99. A disulfide bridge links Cys99 with Cys195. Gly123 provides a ligand contact to ATP. Residues 145-147 (KDQ) form an interaction with tRNA region. The active-site Cysteine persulfide intermediate is the Cys195. An interaction with tRNA region spans residues 309–310 (RY).

The protein belongs to the MnmA/TRMU family.

It localises to the cytoplasm. It carries out the reaction S-sulfanyl-L-cysteinyl-[protein] + uridine(34) in tRNA + AH2 + ATP = 2-thiouridine(34) in tRNA + L-cysteinyl-[protein] + A + AMP + diphosphate + H(+). Functionally, catalyzes the 2-thiolation of uridine at the wobble position (U34) of tRNA, leading to the formation of s(2)U34. The sequence is that of tRNA-specific 2-thiouridylase MnmA from Methylococcus capsulatus (strain ATCC 33009 / NCIMB 11132 / Bath).